A 1161-amino-acid polypeptide reads, in one-letter code: Nardilysin (1161 aa).

A signal peptide spans 1-18; that stretch reads MLRRVAVAAVCVTGRKLR. Disordered regions lie at residues 49-103 and 130-218; these read MPGR…IIKS and VEGK…KKTT. A phosphoserine mark is found at serine 85, serine 91, and serine 93. Residues 138 to 209 are compositionally biased toward acidic residues; that stretch reads TDEEEEEEEE…EENELEELEE (72 aa). Histidine 244 is a binding site for Zn(2+). Catalysis depends on glutamate 247, which acts as the Proton acceptor. Zn(2+)-binding residues include histidine 248 and glutamate 325.

The protein belongs to the peptidase M16 family. In terms of assembly, interacts with BACE1 and NRG1. Zn(2+) is required as a cofactor. As to expression, highly expressed in brain of early postnatal mice but expressed at a lower level in the brains of adult mice. Expression is high in cortical neurons, and lower in neurons in the striatum. Very low expression detected in the corpus callosum. Also expressed in the gray matter in spinal cord and dorsal root ganglia.

Its subcellular location is the mitochondrion. The protein resides in the cell projection. It is found in the dendrite. It catalyses the reaction Hydrolysis of polypeptides, preferably at -Xaa-|-Arg-Lys-, and less commonly at -Arg-|-Arg-Xaa-, in which Xaa is not Arg or Lys.. Its function is as follows. Cleaves peptide substrates on the N-terminus of arginine residues in dibasic pairs. Is a critical activator of BACE1- and ADAM17-mediated pro-neuregulin ectodomain shedding, involved in the positive regulation of axonal maturation and myelination. Required for proper functioning of 2-oxoglutarate dehydrogenase (OGDH). In Mus musculus (Mouse), this protein is Nardilysin.